A 559-amino-acid polypeptide reads, in one-letter code: Urocanate hydratase (559 aa).

NAD(+) contacts are provided by residues glycine 53–glycine 54, glutamine 131, glycine 177–glycine 179, glutamate 197, arginine 202, asparagine 243–alanine 244, glutamine 264–histidine 268, tyrosine 274–leucine 275, and tyrosine 323. The active site involves cysteine 411. Glycine 493 contacts NAD(+).

It belongs to the urocanase family. Requires NAD(+) as cofactor.

It localises to the cytoplasm. The enzyme catalyses 4-imidazolone-5-propanoate = trans-urocanate + H2O. It functions in the pathway amino-acid degradation; L-histidine degradation into L-glutamate; N-formimidoyl-L-glutamate from L-histidine: step 2/3. Functionally, catalyzes the conversion of urocanate to 4-imidazolone-5-propionate. In Pseudomonas aeruginosa (strain LESB58), this protein is Urocanate hydratase.